Reading from the N-terminus, the 290-residue chain is MREIVHLQAGQCGNQIGAKFWEVISDEHGIDPTGTYHGDSDLQLERINVYYNEATGGKYVPRAVLVDLEPGTMDSVRSGPFGQIFRPDNFVFGQSGAGNNWAKGHYTEGAELVDSVLDVVRKEAESCDCLQGFQLTHSLGGGTGSGMGTLLISKIREEYPDRLTTPTYGDLNHLVSATMSGVTTCLRFPGQLNADLRKLAVNMVPFPRLHFFMPGFAPLTSRALTVPELTQQMFDAKHGRYLTVAAVFRTAVCDIPPRGLKMSATFIGNSTAIQELFKRISEQFTAMFRR.

An MREI motif motif is present at residues 1-4 (MREI). Residue Q11 coordinates GTP. A Phosphothreonine modification is found at T55. At K58 the chain carries N6-acetyllysine. Residues E69, S138, G142, T143, G144, and N172 each contribute to the GTP site. A Mg(2+)-binding site is contributed by E69.

It belongs to the tubulin family. As to quaternary structure, dimer of alpha and beta chains. A typical microtubule is a hollow water-filled tube with an outer diameter of 25 nm and an inner diameter of 15 nM. Alpha-beta heterodimers associate head-to-tail to form protofilaments running lengthwise along the microtubule wall with the beta-tubulin subunit facing the microtubule plus end conferring a structural polarity. Microtubules usually have 13 protofilaments but different protofilament numbers can be found in some organisms and specialized cells. Component of sperm flagellar doublet microtubules. It depends on Mg(2+) as a cofactor. In terms of processing, some glutamate residues at the C-terminus are polyglycylated, resulting in polyglycine chains on the gamma-carboxyl group. Glycylation is mainly limited to tubulin incorporated into axonemes (cilia and flagella) whereas glutamylation is prevalent in neuronal cells, centrioles, axonemes, and the mitotic spindle. Both modifications can coexist on the same protein on adjacent residues, and lowering polyglycylation levels increases polyglutamylation, and reciprocally. Cilia and flagella glycylation is required for their stability and maintenance. Flagella glycylation controls sperm motility. Some glutamate residues at the C-terminus are polyglutamylated, resulting in polyglutamate chains on the gamma-carboxyl group. Polyglutamylation plays a key role in microtubule severing by spastin (SPAST). SPAST preferentially recognizes and acts on microtubules decorated with short polyglutamate tails: severing activity by SPAST increases as the number of glutamates per tubulin rises from one to eight, but decreases beyond this glutamylation threshold. Glutamylation is also involved in cilia motility.

It localises to the cytoplasm. It is found in the cytoskeleton. The protein localises to the flagellum axoneme. In terms of biological role, tubulin is the major constituent of microtubules, a cylinder consisting of laterally associated linear protofilaments composed of alpha- and beta-tubulin heterodimers. Microtubules grow by the addition of GTP-tubulin dimers to the microtubule end, where a stabilizing cap forms. Below the cap, tubulin dimers are in GDP-bound state, owing to GTPase activity of alpha-tubulin. The polypeptide is Tubulin beta-4B chain (TUBB4B) (Mesocricetus auratus (Golden hamster)).